The sequence spans 734 residues: Photosystem I P700 chlorophyll a apoprotein A2 (734 aa).

The next 8 helical transmembrane spans lie at 46–69 (IFASHFGQLAIIFLWTSGNLFHVA), 135–158 (LYTGALFLLLISAISLIAGWLHLQ), 175–199 (LNHHLSGLFGVSSLAWTGHLVHVAI), 273–291 (MAHHHLAIAFLFLIAGHMY), 330–353 (LHFQLGLALASLGVITSLVAQHMY), 369–395 (AALYTHHQYIAGFIMTGAFAHGAIFFI), 417–439 (AIISHLSWASLFLGFHTLGLYVH), and 517–535 (FLVHHAIALGLHTTTLILV). Cysteine 559 and cysteine 568 together coordinate [4Fe-4S] cluster. 2 helical membrane passes run 575 to 596 (AFYLAVFWMLNTIGWVTFYWHW) and 643 to 665 (LSVWAWMFLFGHLVWATGFMFLI). Chlorophyll a is bound by residues histidine 654, methionine 662, and tyrosine 670. Tryptophan 671 serves as a coordination point for phylloquinone. The helical transmembrane segment at 707–727 (LVGLAHFSVGYIFTYAAFLIA) threads the bilayer.

The protein belongs to the PsaA/PsaB family. As to quaternary structure, the PsaA/B heterodimer binds the P700 chlorophyll special pair and subsequent electron acceptors. PSI consists of a core antenna complex that captures photons, and an electron transfer chain that converts photonic excitation into a charge separation. The eukaryotic PSI reaction center is composed of at least 11 subunits. P700 is a chlorophyll a/chlorophyll a' dimer, A0 is one or more chlorophyll a, A1 is one or both phylloquinones and FX is a shared 4Fe-4S iron-sulfur center. serves as cofactor.

It localises to the plastid. The protein resides in the chloroplast thylakoid membrane. The enzyme catalyses reduced [plastocyanin] + hnu + oxidized [2Fe-2S]-[ferredoxin] = oxidized [plastocyanin] + reduced [2Fe-2S]-[ferredoxin]. Its function is as follows. PsaA and PsaB bind P700, the primary electron donor of photosystem I (PSI), as well as the electron acceptors A0, A1 and FX. PSI is a plastocyanin-ferredoxin oxidoreductase, converting photonic excitation into a charge separation, which transfers an electron from the donor P700 chlorophyll pair to the spectroscopically characterized acceptors A0, A1, FX, FA and FB in turn. Oxidized P700 is reduced on the lumenal side of the thylakoid membrane by plastocyanin. The protein is Photosystem I P700 chlorophyll a apoprotein A2 of Lactuca sativa (Garden lettuce).